The primary structure comprises 497 residues: UDP-N-acetylmuramoyl-L-alanyl-D-glutamate--2,6-diaminopimelate ligase (497 aa).

Ser-29 serves as a coordination point for UDP-N-acetyl-alpha-D-muramoyl-L-alanyl-D-glutamate. ATP is bound at residue 116 to 122; the sequence is GTNGKTT. UDP-N-acetyl-alpha-D-muramoyl-L-alanyl-D-glutamate is bound by residues Asn-157, 158-159, Ser-185, Gln-191, and Arg-193; that span reads TT. Position 225 is an N6-carboxylysine (Lys-225). Meso-2,6-diaminopimelate is bound by residues Arg-392, 416-419, Gly-467, and Glu-471; that span reads DNPR. The Meso-diaminopimelate recognition motif signature appears at 416–419; the sequence is DNPR.

This sequence belongs to the MurCDEF family. MurE subfamily. Mg(2+) is required as a cofactor. Post-translationally, carboxylation is probably crucial for Mg(2+) binding and, consequently, for the gamma-phosphate positioning of ATP.

It localises to the cytoplasm. The enzyme catalyses UDP-N-acetyl-alpha-D-muramoyl-L-alanyl-D-glutamate + meso-2,6-diaminopimelate + ATP = UDP-N-acetyl-alpha-D-muramoyl-L-alanyl-gamma-D-glutamyl-meso-2,6-diaminopimelate + ADP + phosphate + H(+). Its pathway is cell wall biogenesis; peptidoglycan biosynthesis. Catalyzes the addition of meso-diaminopimelic acid to the nucleotide precursor UDP-N-acetylmuramoyl-L-alanyl-D-glutamate (UMAG) in the biosynthesis of bacterial cell-wall peptidoglycan. The protein is UDP-N-acetylmuramoyl-L-alanyl-D-glutamate--2,6-diaminopimelate ligase of Buchnera aphidicola subsp. Acyrthosiphon pisum (strain APS) (Acyrthosiphon pisum symbiotic bacterium).